The sequence spans 273 residues: MEYSKISVLIADDNKEFCNILNDYLLNQSDIVVVGIAKDGIEALKLIEEKKPDLVILDIIMPNMDGLVVLEKLANINIDPVPNVIVLSAVGQDKITQRAITLGADYYVVKPFDMDVFTKRIRQMFNNTILDSETKKTMPISEKAADVKISQSVPLDLEDESIIHEIGVPAHIKGYMYLREAINMVVDNIELLSAVTKELYPSIAKKYNTTASRVERAIRHAIEVAWSRGQVDTINKLFGYTIHNGKGKPTNSEFIAMIADKLRLKNKVKNVAQ.

A Response regulatory domain is found at serine 7–phenylalanine 125. Ca(2+) contacts are provided by aspartate 12, aspartate 13, and aspartate 58. At aspartate 58 the chain carries 4-aspartylphosphate. The segment at residues proline 201–histidine 220 is a DNA-binding region (H-T-H motif).

Requires Ca(2+) as cofactor.

The protein localises to the cytoplasm. In terms of biological role, may play the central regulatory role in sporulation. It may be an element of the effector pathway responsible for the activation of sporulation genes in response to nutritional stress. Spo0A may act in concert with spo0H (a sigma factor) to control the expression of some genes that are critical to the sporulation process. The protein is Stage 0 sporulation protein A homolog (spo0A) of Clostridium pasteurianum.